We begin with the raw amino-acid sequence, 81 residues long: Large ribosomal subunit protein bL31B (81 aa).

The protein belongs to the bacterial ribosomal protein bL31 family. Type B subfamily. Part of the 50S ribosomal subunit.

This Limosilactobacillus fermentum (strain NBRC 3956 / LMG 18251) (Lactobacillus fermentum) protein is Large ribosomal subunit protein bL31B.